Consider the following 268-residue polypeptide: MDLPVNRFKQRLRSGEAQIGLWLGLADPYCAELAANAGFDWLLLDGEHAPNDLRSLLGQLQALAPYPGQPVIRPVQGDTALIKQLLDIGAQTLLVPMVDSAAQAEGLVRAVRYPPAGVRGVGSALARASRWNSVAEYLNHADEQMCLLVQVENLEGLANLDAIAAVEGVDGVFIGPADLSAAMGHRGNPGHPEVQAAIEDAIHRIRTAGKAAGILSADETLARRYLELGCAFVAVGVDTSLLMRSLRELAGRFKGGAPAPSASSSVYG.

His48 functions as the Proton acceptor in the catalytic mechanism. 2 residues coordinate a divalent metal cation: Glu152 and Asp178.

It belongs to the HpcH/HpaI aldolase family. Mn(2+) serves as cofactor. Mg(2+) is required as a cofactor. The cofactor is Co(2+).

The catalysed reaction is D-glyceraldehyde + 3-hydroxypyruvate = (3R,4S,5R)-3,4,5,6-tetrahydroxy-2-oxohexanoate. The enzyme catalyses D-glyceraldehyde + 3-hydroxypyruvate = 2-dehydro-D-gluconate. It catalyses the reaction D-glyceraldehyde + 3-hydroxypyruvate = 2-dehydro-D-galactonate. It carries out the reaction D-glyceraldehyde + pyruvate = 2-dehydro-3-deoxy-L-galactonate. The catalysed reaction is 2-dehydro-3-deoxy-D-gluconate = D-glyceraldehyde + pyruvate. Aldolase which can catalyze in vitro the aldolisation reaction between hydroxypyruvate (HPA) or pyruvate (PA) and D-glyceraldehyde (D-GA). The condensation of hydroxypyruvate and D-glyceraldehyde produces (3R,4S,5R)-3,4,5,6-tetrahydroxy-2-oxohexanoate as the major product, 2-dehydro-D-gluconate and 2-dehydro-D-galactonate. The condensation of pyruvate and D-glyceraldehyde produces 2-dehydro-3-deoxy-L-galactonate as the major product and 2-dehydro-3-deoxy-D-gluconate. Also catalyzes the retro-aldol type decarboxylation of oxaloacetate, a general property of known pyruvate aldolases. This is Hydroxypyruvate/pyruvate aldolase from Pseudomonas aeruginosa.